We begin with the raw amino-acid sequence, 335 residues long: Holliday junction branch migration complex subunit RuvB (335 aa).

The segment at 4 to 184 (ADRLIQPTAL…FGIVQRLEFY (181 aa)) is large ATPase domain (RuvB-L). ATP contacts are provided by residues isoleucine 23, arginine 24, glycine 65, lysine 68, threonine 69, threonine 70, 131-133 (EDY), arginine 174, tyrosine 184, and arginine 221. Threonine 69 serves as a coordination point for Mg(2+). A small ATPAse domain (RuvB-S) region spans residues 185 to 255 (NIKDLTQIVK…VASAALDMLD (71 aa)). The head domain (RuvB-H) stretch occupies residues 258-335 (KEGFDYMDRK…LHFGYDYEPN (78 aa)). DNA contacts are provided by arginine 294, arginine 313, and arginine 318.

The protein belongs to the RuvB family. Homohexamer. Forms an RuvA(8)-RuvB(12)-Holliday junction (HJ) complex. HJ DNA is sandwiched between 2 RuvA tetramers; dsDNA enters through RuvA and exits via RuvB. An RuvB hexamer assembles on each DNA strand where it exits the tetramer. Each RuvB hexamer is contacted by two RuvA subunits (via domain III) on 2 adjacent RuvB subunits; this complex drives branch migration. In the full resolvosome a probable DNA-RuvA(4)-RuvB(12)-RuvC(2) complex forms which resolves the HJ.

Its subcellular location is the cytoplasm. The catalysed reaction is ATP + H2O = ADP + phosphate + H(+). Functionally, the RuvA-RuvB-RuvC complex processes Holliday junction (HJ) DNA during genetic recombination and DNA repair, while the RuvA-RuvB complex plays an important role in the rescue of blocked DNA replication forks via replication fork reversal (RFR). RuvA specifically binds to HJ cruciform DNA, conferring on it an open structure. The RuvB hexamer acts as an ATP-dependent pump, pulling dsDNA into and through the RuvAB complex. RuvB forms 2 homohexamers on either side of HJ DNA bound by 1 or 2 RuvA tetramers; 4 subunits per hexamer contact DNA at a time. Coordinated motions by a converter formed by DNA-disengaged RuvB subunits stimulates ATP hydrolysis and nucleotide exchange. Immobilization of the converter enables RuvB to convert the ATP-contained energy into a lever motion, pulling 2 nucleotides of DNA out of the RuvA tetramer per ATP hydrolyzed, thus driving DNA branch migration. The RuvB motors rotate together with the DNA substrate, which together with the progressing nucleotide cycle form the mechanistic basis for DNA recombination by continuous HJ branch migration. Branch migration allows RuvC to scan DNA until it finds its consensus sequence, where it cleaves and resolves cruciform DNA. The chain is Holliday junction branch migration complex subunit RuvB from Pseudoalteromonas atlantica (strain T6c / ATCC BAA-1087).